We begin with the raw amino-acid sequence, 144 residues long: Transcription antitermination protein NusB (144 aa).

It belongs to the NusB family.

Functionally, involved in transcription antitermination. Required for transcription of ribosomal RNA (rRNA) genes. Binds specifically to the boxA antiterminator sequence of the ribosomal RNA (rrn) operons. The polypeptide is Transcription antitermination protein NusB (Streptomyces avermitilis (strain ATCC 31267 / DSM 46492 / JCM 5070 / NBRC 14893 / NCIMB 12804 / NRRL 8165 / MA-4680)).